The primary structure comprises 248 residues: Calpain small subunit 2 (248 aa).

Ca(2+)-binding residues include Ala-89, Asp-92, Glu-94, Asp-117, Asp-132, Asp-134, Thr-136, Lys-138, Glu-143, Asp-162, Asp-164, Ser-166, and Asp-205. EF-hand domains follow at residues 119–152 (FSLD…NNIK), 149–184 (NNIK…AGFQ), 185–213 (LNEQ…ISCL), and 214–248 (VRLD…TMYS).

In terms of assembly, heterodimer of a large (catalytic) and a small (regulatory) subunit.

The protein localises to the cytoplasm. It is found in the cell membrane. Its function is as follows. Calcium-regulated non-lysosomal thiol-protease which catalyzes limited proteolysis of substrates involved in cytoskeletal remodeling and signal transduction. This small subunit may act as a tissue-specific chaperone of the large subunit, possibly by helping it fold into its correct conformation for activity. In Homo sapiens (Human), this protein is Calpain small subunit 2 (CAPNS2).